The sequence spans 240 residues: uncharacterized protein (240 aa).

The active-site Proton acceptor is the D66. D129 is an active-site residue. Residue H131 is the Proton acceptor of the active site.

The protein belongs to the glucosamine/galactosamine-6-phosphate isomerase family.

This is an uncharacterized protein from Escherichia coli (strain K12).